The chain runs to 312 residues: MNNIHTPVMATEMLSYLAPVDNETYLDCTFGTGGYSKLILSNCNCKIIAFDRDPAVISIASQFYQQYSNRFTFFNDNFVEANKYLSKSAKLNGIVMDLGVSSMQLDAANRGFSFRYDAELDMRMSQKGYKASELVNEASEHQLADIIYKFGEENKANKIAKHIVLAREKKPITTTLQLANIIREAVGYNNYYKKNKIDSATKTFQAIRIFINDELSAIQNFLNQSLELLAVNGRLIVVSFHALEDAIVKKFMHQNAVKKVAQSKYSTNKQLPLQNGVLHLLTKKIAVPTRTEIINNPRSRSARLRAALKINE.

S-adenosyl-L-methionine is bound by residues Gly-33–Tyr-35, Asp-51, Phe-78, Asp-97, and Gln-104.

This sequence belongs to the methyltransferase superfamily. RsmH family.

It localises to the cytoplasm. It catalyses the reaction cytidine(1402) in 16S rRNA + S-adenosyl-L-methionine = N(4)-methylcytidine(1402) in 16S rRNA + S-adenosyl-L-homocysteine + H(+). Its function is as follows. Specifically methylates the N4 position of cytidine in position 1402 (C1402) of 16S rRNA. This chain is Ribosomal RNA small subunit methyltransferase H, found in Orientia tsutsugamushi (strain Boryong) (Rickettsia tsutsugamushi).